Reading from the N-terminus, the 282-residue chain is Biotin synthase (282 aa).

In terms of domain architecture, Radical SAM core spans 1–228 (MQEIFLCSIS…NARLMVAGGR (228 aa)). Positions 17, 21, and 24 each coordinate [4Fe-4S] cluster. [2Fe-2S] cluster is bound by residues Cys61, Cys96, Cys154, and Arg221.

The protein belongs to the radical SAM superfamily. Biotin synthase family. Homodimer. Requires [4Fe-4S] cluster as cofactor. [2Fe-2S] cluster is required as a cofactor.

The catalysed reaction is (4R,5S)-dethiobiotin + (sulfur carrier)-SH + 2 reduced [2Fe-2S]-[ferredoxin] + 2 S-adenosyl-L-methionine = (sulfur carrier)-H + biotin + 2 5'-deoxyadenosine + 2 L-methionine + 2 oxidized [2Fe-2S]-[ferredoxin]. Its pathway is cofactor biosynthesis; biotin biosynthesis; biotin from 7,8-diaminononanoate: step 2/2. Catalyzes the conversion of dethiobiotin (DTB) to biotin by the insertion of a sulfur atom into dethiobiotin via a radical-based mechanism. The chain is Biotin synthase from Helicobacter pylori (strain P12).